A 123-amino-acid polypeptide reads, in one-letter code: Small ribosomal subunit protein uS13 (123 aa).

The disordered stretch occupies residues 97–123; the sequence is PVRGQRTHTNAKTRKGRSRLPVAAKKK.

The protein belongs to the universal ribosomal protein uS13 family. Part of the 30S ribosomal subunit. Forms a loose heterodimer with protein S19. Forms two bridges to the 50S subunit in the 70S ribosome.

Functionally, located at the top of the head of the 30S subunit, it contacts several helices of the 16S rRNA. In the 70S ribosome it contacts the 23S rRNA (bridge B1a) and protein L5 of the 50S subunit (bridge B1b), connecting the 2 subunits; these bridges are implicated in subunit movement. Contacts the tRNAs in the A and P-sites. The chain is Small ribosomal subunit protein uS13 from Ehrlichia ruminantium (strain Gardel).